A 257-amino-acid polypeptide reads, in one-letter code: Acetylglutamate kinase (257 aa).

Residues Gly43–Gly44, Arg65, and Asn157 contribute to the substrate site. ATP is bound by residues Asp180 to Leu185 and Ile208 to Thr210.

It belongs to the acetylglutamate kinase family. ArgB subfamily. In terms of assembly, homodimer.

It is found in the cytoplasm. It catalyses the reaction N-acetyl-L-glutamate + ATP = N-acetyl-L-glutamyl 5-phosphate + ADP. The protein operates within amino-acid biosynthesis; L-arginine biosynthesis; N(2)-acetyl-L-ornithine from L-glutamate: step 2/4. Functionally, catalyzes the ATP-dependent phosphorylation of N-acetyl-L-glutamate. The polypeptide is Acetylglutamate kinase (Edwardsiella ictaluri (strain 93-146)).